A 373-amino-acid chain; its full sequence is Probable G-protein coupled receptor 45 (373 aa).

The Extracellular portion of the chain corresponds to methionine 1–alanine 38. Asparagine 17 is a glycosylation site (N-linked (GlcNAc...) asparagine). A helical transmembrane segment spans residues isoleucine 39–valine 59. Residues tyrosine 60 to threonine 75 lie on the Cytoplasmic side of the membrane. A helical transmembrane segment spans residues leucine 76–isoleucine 96. The Extracellular portion of the chain corresponds to threonine 97–leucine 109. Residues serine 110 to valine 130 traverse the membrane as a helical segment. The Cytoplasmic segment spans residues aspartate 131–lysine 149. Residues methionine 150–tryptophan 170 form a helical membrane-spanning segment. The Extracellular segment spans residues threonine 171–threonine 198. Residues leucine 199–leucine 219 form a helical membrane-spanning segment. Residues asparagine 220–threonine 269 lie on the Cytoplasmic side of the membrane. Residues isoleucine 270–leucine 290 traverse the membrane as a helical segment. At serine 291–threonine 306 the chain is on the extracellular side. A helical transmembrane segment spans residues serine 307 to tryptophan 327. The Cytoplasmic segment spans residues arginine 328–valine 373.

The protein belongs to the G-protein coupled receptor 1 family. As to expression, brain specific.

The protein resides in the cell membrane. Functionally, orphan receptor. May play a role in brain function. This Mus musculus (Mouse) protein is Probable G-protein coupled receptor 45 (Gpr45).